A 273-amino-acid chain; its full sequence is Homeobox protein HMX2 (273 aa).

The segment at 1-154 (MGSKEDVGKG…TGAAKKKTRT (154 aa)) is disordered. Residues 114–123 (PDFKEEKERL) show a composition bias toward basic and acidic residues. Residues 149 to 208 (KKKTRTVFSRSQVYQLESTFDMKRYLSSSERACLASSLQLTETQVKTWFQNRRNKWKRQL) constitute a DNA-binding region (homeobox).

The protein belongs to the HMX homeobox family. Expressed in the developing CNS, including a specific expression in vestibular structures throughout inner ear development.

The protein resides in the nucleus. In terms of biological role, transcription factor involved in specification of neuronal cell types and which is required for inner ear and hypothalamus development. The chain is Homeobox protein HMX2 (Hmx2) from Mus musculus (Mouse).